Consider the following 78-residue polypeptide: Longicornsin (78 aa).

Positions 1 to 22 (MAESTTTCFLLLVTGYVTAVMS) are cleaved as a signal peptide. Positions 23–29 (EEAHLRS) are excised as a propeptide. Intrachain disulfides connect Cys-35–Cys-58, Cys-43–Cys-63, and Cys-47–Cys-65.

In terms of tissue distribution, salivary glands (at protein level).

Its subcellular location is the secreted. Its function is as follows. Has antibacterial activity against the Gram-positive bacteria S.aureus ATCC2592 (MIC=0.8 ug/ml), S.aureus 6A (MIC=0.8 ug/ml) and S.aureus 15A (MIC=1.6 ug/ml), and against the Gram-negative bacteria E.coli ATCC 25922 (MIC=3.2 ug/ml), E.coli 23A (MIC=6.4 ug/ml), E.coli 27A (MIC=6.4 ug/ml), P.aeruginosa 3A (MIC=3.2 ug/ml), P.aeruginosa 7A (MIC=0.8 ug/ml) and H.pylori NCTC11637 (MIC=6.4 ug/ml). Has antifungal activity against C.albidus ATCC2002 (MIC=25.6 ug/ml). Very low hemolytic activity against rabbit erythrocytes. In Haemaphysalis longicornis (Bush tick), this protein is Longicornsin.